The primary structure comprises 228 residues: uncharacterized protein (228 aa).

It to E.coli YbfG.

This is an uncharacterized protein from Haemophilus influenzae (strain ATCC 51907 / DSM 11121 / KW20 / Rd).